Here is a 467-residue protein sequence, read N- to C-terminus: uncharacterized protein (467 aa).

An N6-(pyridoxal phosphate)lysine modification is found at K290.

It belongs to the class-III pyridoxal-phosphate-dependent aminotransferase family. Pyridoxal 5'-phosphate serves as cofactor.

This is an uncharacterized protein from Sinorhizobium fredii (strain NBRC 101917 / NGR234).